The following is a 196-amino-acid chain: Phosphoheptose isomerase (196 aa).

One can recognise an SIS domain in the interval 34–193 (LIETFKIGNK…EQGLFGIFAG (160 aa)). Substrate is bound at residue 49 to 51 (NGG). 2 residues coordinate Zn(2+): histidine 58 and glutamate 62. Substrate-binding positions include glutamate 62, 91 to 92 (ND), 117 to 119 (STS), serine 122, and glutamine 169. Zn(2+) contacts are provided by glutamine 169 and histidine 177.

It belongs to the SIS family. GmhA subfamily. Homotetramer. The cofactor is Zn(2+).

The protein resides in the cytoplasm. The catalysed reaction is 2 D-sedoheptulose 7-phosphate = D-glycero-alpha-D-manno-heptose 7-phosphate + D-glycero-beta-D-manno-heptose 7-phosphate. The protein operates within carbohydrate biosynthesis; D-glycero-D-manno-heptose 7-phosphate biosynthesis; D-glycero-alpha-D-manno-heptose 7-phosphate and D-glycero-beta-D-manno-heptose 7-phosphate from sedoheptulose 7-phosphate: step 1/1. Its function is as follows. Catalyzes the isomerization of sedoheptulose 7-phosphate in D-glycero-D-manno-heptose 7-phosphate. The protein is Phosphoheptose isomerase of Trichlorobacter lovleyi (strain ATCC BAA-1151 / DSM 17278 / SZ) (Geobacter lovleyi).